The chain runs to 283 residues: Demethylrebeccamycin-D-glucose O-methyltransferase (283 aa).

Residues S101, Q106, 129-130 (DA), L146, and H151 each bind S-adenosyl-L-methionine.

Belongs to the methyltransferase superfamily. In terms of assembly, monomer.

It catalyses the reaction 4'-demethylrebeccamycin + S-adenosyl-L-methionine = rebeccamycin + S-adenosyl-L-homocysteine + H(+). Functionally, glycosyl O-methyltransferase that catalyzes the final step in the biosynthesis of rebeccamycin, an indolocarbazole alkaloid that inhibits topoisomerase 1. Has broad substrate specificity and functions as glycosyl O-methyltransferase on a number of rebeccamycin analogs. In Lentzea aerocolonigenes (Lechevalieria aerocolonigenes), this protein is Demethylrebeccamycin-D-glucose O-methyltransferase (rebM).